The following is a 374-amino-acid chain: uncharacterized protein (374 aa).

The stretch at 39–66 (RDVRKHLESRDAKQELIDSLEEAVRDSR) forms a coiled coil.

This is an uncharacterized protein from Mycobacterium tuberculosis (strain CDC 1551 / Oshkosh).